We begin with the raw amino-acid sequence, 168 residues long: Large ribosomal subunit protein uL24 (168 aa).

Residues 112–168 (LEGKDPRKQPKEAPKAAEKPAKEEPKKETPKAEEKPAKEEPKETKVEKKSEEKEDEN) are disordered.

Belongs to the universal ribosomal protein uL24 family. As to quaternary structure, part of the 50S ribosomal subunit.

One of two assembly initiator proteins, it binds directly to the 5'-end of the 23S rRNA, where it nucleates assembly of the 50S subunit. In terms of biological role, located at the polypeptide exit tunnel on the outside of the subunit. The polypeptide is Large ribosomal subunit protein uL24 (Nitrosopumilus maritimus (strain SCM1)).